Reading from the N-terminus, the 356-residue chain is Nicotinate-nucleotide--dimethylbenzimidazole phosphoribosyltransferase (356 aa).

The active-site Proton acceptor is glutamate 317.

This sequence belongs to the CobT family. In terms of assembly, homodimer.

It carries out the reaction 5,6-dimethylbenzimidazole + nicotinate beta-D-ribonucleotide = alpha-ribazole 5'-phosphate + nicotinate + H(+). It participates in nucleoside biosynthesis; alpha-ribazole biosynthesis; alpha-ribazole from 5,6-dimethylbenzimidazole: step 1/2. In terms of biological role, catalyzes the synthesis of alpha-ribazole-5'-phosphate from nicotinate mononucleotide (NAMN) and 5,6-dimethylbenzimidazole (DMB). In Salmonella paratyphi A (strain ATCC 9150 / SARB42), this protein is Nicotinate-nucleotide--dimethylbenzimidazole phosphoribosyltransferase.